We begin with the raw amino-acid sequence, 578 residues long: Polypeptide N-acetylgalactosaminyltransferase 4 (578 aa).

At 1 to 12 (MAVRWTWAGKSC) the chain is on the cytoplasmic side. Residues 13 to 35 (LLLALLTLAYILVEFSVSTLYAS) form a helical; Signal-anchor for type II membrane protein membrane-spanning segment. Over 36-578 (PGAGGARELG…DKNQLWRFEK (543 aa)) the chain is Lumenal. Intrachain disulfides connect cysteine 124–cysteine 357, cysteine 348–cysteine 421, cysteine 457–cysteine 477, cysteine 503–cysteine 518, and cysteine 547–cysteine 565. Residues 134-243 (LPTTSVIIAF…TGWLEPLLER (110 aa)) are catalytic subdomain A. Substrate contacts are provided by aspartate 175 and arginine 204. Mn(2+)-binding residues include aspartate 227 and histidine 229. Residues 303-365 (PIRSPTMAGG…PCSHVGHVFP (63 aa)) form a catalytic subdomain B region. Residue tryptophan 334 participates in substrate binding. Histidine 362 serves as a coordination point for Mn(2+). Residue tyrosine 370 participates in substrate binding. The region spanning 444–577 (WHGAIRSMGI…LDKNQLWRFE (134 aa)) is the Ricin B-type lectin domain. Residue asparagine 471 is glycosylated (N-linked (GlcNAc...) asparagine).

It belongs to the glycosyltransferase 2 family. GalNAc-T subfamily. Mn(2+) serves as cofactor. Highly expressed in sublingual gland, stomach, colon, small intestine and cervix. Expressed at intermediate levels in kidney, ovary, lung and uterus. Weakly expressed in spleen, liver, heart and brain. Not expressed in submandibular and parotid glands, skeletal muscle and testis.

The protein resides in the golgi apparatus membrane. It catalyses the reaction L-seryl-[protein] + UDP-N-acetyl-alpha-D-galactosamine = a 3-O-[N-acetyl-alpha-D-galactosaminyl]-L-seryl-[protein] + UDP + H(+). It carries out the reaction L-threonyl-[protein] + UDP-N-acetyl-alpha-D-galactosamine = a 3-O-[N-acetyl-alpha-D-galactosaminyl]-L-threonyl-[protein] + UDP + H(+). It functions in the pathway protein modification; protein glycosylation. Its function is as follows. Catalyzes the initial reaction in O-linked oligosaccharide biosynthesis, the transfer of an N-acetyl-D-galactosamine residue to a serine or threonine residue on the protein receptor. Has a highest activity toward EA2 peptide substrate and a much lower activity with EPO-T, Muc2, Muc1a, Muc1b. The protein is Polypeptide N-acetylgalactosaminyltransferase 4 (Galnt4) of Mus musculus (Mouse).